The following is a 487-amino-acid chain: Virulence sensor histidine kinase PhoQ (487 aa).

The Cytoplasmic portion of the chain corresponds to 1–16 (MNKFARHFLPLSLRVR). A helical transmembrane segment spans residues 17-37 (FLLATAGVVLVLSLAYGIVAL). Residues 38–193 (VGYSVSFDKT…ELKRSYMVWS (156 aa)) lie on the Periplasmic side of the membrane. Residues D151 and D152 each contribute to the a divalent metal cation site. The chain crosses the membrane as a helical span at residues 194–214 (WFVYVLAANLLLVIPLLWIAA). Residues 215–266 (WWSLRPIEALAREVRELEDHHREMLNPETTRELTSLVRNLNQLLKSERERYN) enclose the HAMP domain. Residues 215-487 (WWSLRPIEAL…GRQHPTQKEE (273 aa)) lie on the Cytoplasmic side of the membrane. One can recognise a Histidine kinase domain in the interval 274 to 481 (DLTHSLKTPL…RMEVVFGRQH (208 aa)). H277 is subject to Phosphohistidine; by autocatalysis. Mg(2+) is bound at residue N386. ATP-binding positions include 386-394 (NVLDNACKY), 416-421 (DDGPGI), and 435-447 (RADT…GVGL). Position 443 (Q443) interacts with Mg(2+).

In terms of assembly, homodimer.

It localises to the cell inner membrane. It carries out the reaction ATP + protein L-histidine = ADP + protein N-phospho-L-histidine.. Member of the two-component regulatory system PhoP/PhoQ which regulates the expression of genes involved in virulence and resistance to host defense antimicrobial peptides. In low periplasmic Mg(2+), PhoQ functions as a membrane-associated protein kinase that undergoes autophosphorylation and subsequently transfers the phosphate to PhoP, which results in the expression of PhoP-activated genes (PAG) and repression of PhoP-repressed genes (PRG). In high periplasmic Mg(2+), acts as a protein phosphatase that dephosphorylates phospho-PhoP, which results in the repression of PAG and may lead to expression of some PRG. This is Virulence sensor histidine kinase PhoQ (phoQ) from Salmonella paratyphi A (strain ATCC 9150 / SARB42).